Here is a 282-residue protein sequence, read N- to C-terminus: Small-conductance mechanosensitive channel (282 aa).

Over Met-1–Asp-23 the chain is Periplasmic. A helical membrane pass occupies residues Val-24–Tyr-46. Residues Lys-47–Ser-66 lie on the Cytoplasmic side of the membrane. A helical transmembrane segment spans residues Leu-67–Leu-87. At Phe-88–Asn-89 the chain is on the periplasmic side. Residues Ile-90–Ala-110 form a helical membrane-spanning segment. At Gln-111 to Asn-282 the chain is on the cytoplasmic side.

It belongs to the MscS (TC 1.A.23) family. In terms of assembly, homoheptamer.

The protein resides in the cell inner membrane. Its function is as follows. Mechanosensitive ion channel that participates in the regulation of osmotic pressure changes within the cell, opening in response to stretch forces in the membrane lipid bilayer, without the need for other proteins. Has high selectivity for anions, and may contribute to resistance to hypoosmotic shock. In Caldanaerobacter subterraneus subsp. tengcongensis (strain DSM 15242 / JCM 11007 / NBRC 100824 / MB4) (Thermoanaerobacter tengcongensis), this protein is Small-conductance mechanosensitive channel.